Consider the following 343-residue polypeptide: Zinc finger protein Gfi-1b (343 aa).

A mediates repression of transcription region spans residues Met1 to Tyr20. Residues Met1–Tyr20 are SNAG domain. Residues Ser51–Arg77 are disordered. Basic and acidic residues predominate over residues Glu67–Arg77. 6 C2H2-type zinc fingers span residues Tyr176–His199, Phe205–His227, Phe233–His255, Tyr261–His283, His289–His311, and Phe317–His340.

It is found in the nucleus. Its function is as follows. Essential transcriptional regulator necessary for development and differentiation of erythroid and megakaryocytic lineages. Alters histone methylation by recruiting histone methyltransferase to target genes promoters. Plays a role in heterochromatin formation. This Xenopus laevis (African clawed frog) protein is Zinc finger protein Gfi-1b (gfi1b).